A 273-amino-acid chain; its full sequence is GDNF family receptor alpha-4 (273 aa).

N-linked (GlcNAc...) asparagine glycosylation occurs at Asn-192. A lipid anchor (GPI-anchor amidated asparagine) is attached at Asn-250. Residues 251–273 constitute a propeptide, removed in mature form; the sequence is AGCCFLWVSSMSILTALALQALL.

It belongs to the GDNFR family. In terms of assembly, interacts with ARTN ligand and RET: forms a 2:2:2 ternary complex composed of ARTN ligand, GFRA3 and RET receptor. Interacts with SORL1. Weakly expressed in heart, brain and testis.

The protein localises to the cell membrane. The protein resides in the secreted. In terms of biological role, receptor for persephin (PSPN), a growth factor that exhibits neurotrophic activity on mesencephalic dopaminergic and motor neurons. Acts by binding to its coreceptor, GFRA4, leading to autophosphorylation and activation of the RET receptor. May be important in C-cell development and, in the postnatal development of the adrenal medulla. This Rattus norvegicus (Rat) protein is GDNF family receptor alpha-4 (Gfra4).